Reading from the N-terminus, the 475-residue chain is Aspartyl/glutamyl-tRNA(Asn/Gln) amidotransferase subunit B (475 aa).

Belongs to the GatB/GatE family. GatB subfamily. As to quaternary structure, heterotrimer of A, B and C subunits.

The enzyme catalyses L-glutamyl-tRNA(Gln) + L-glutamine + ATP + H2O = L-glutaminyl-tRNA(Gln) + L-glutamate + ADP + phosphate + H(+). It catalyses the reaction L-aspartyl-tRNA(Asn) + L-glutamine + ATP + H2O = L-asparaginyl-tRNA(Asn) + L-glutamate + ADP + phosphate + 2 H(+). Allows the formation of correctly charged Asn-tRNA(Asn) or Gln-tRNA(Gln) through the transamidation of misacylated Asp-tRNA(Asn) or Glu-tRNA(Gln) in organisms which lack either or both of asparaginyl-tRNA or glutaminyl-tRNA synthetases. The reaction takes place in the presence of glutamine and ATP through an activated phospho-Asp-tRNA(Asn) or phospho-Glu-tRNA(Gln). The protein is Aspartyl/glutamyl-tRNA(Asn/Gln) amidotransferase subunit B of Bacillus mycoides (strain KBAB4) (Bacillus weihenstephanensis).